The sequence spans 296 residues: Ribosomal protein L11 methyltransferase (296 aa).

Residues Thr-145, Gly-166, Asp-188, and Asn-230 each coordinate S-adenosyl-L-methionine.

It belongs to the methyltransferase superfamily. PrmA family.

The protein localises to the cytoplasm. The enzyme catalyses L-lysyl-[protein] + 3 S-adenosyl-L-methionine = N(6),N(6),N(6)-trimethyl-L-lysyl-[protein] + 3 S-adenosyl-L-homocysteine + 3 H(+). Functionally, methylates ribosomal protein L11. In Photorhabdus laumondii subsp. laumondii (strain DSM 15139 / CIP 105565 / TT01) (Photorhabdus luminescens subsp. laumondii), this protein is Ribosomal protein L11 methyltransferase.